A 420-amino-acid chain; its full sequence is Glutamate-1-semialdehyde 2,1-aminomutase (420 aa).

Lys259 carries the post-translational modification N6-(pyridoxal phosphate)lysine.

It belongs to the class-III pyridoxal-phosphate-dependent aminotransferase family. HemL subfamily. In terms of assembly, homodimer. Pyridoxal 5'-phosphate serves as cofactor.

The protein localises to the cytoplasm. It carries out the reaction (S)-4-amino-5-oxopentanoate = 5-aminolevulinate. It participates in porphyrin-containing compound metabolism; protoporphyrin-IX biosynthesis; 5-aminolevulinate from L-glutamyl-tRNA(Glu): step 2/2. This Nautilia profundicola (strain ATCC BAA-1463 / DSM 18972 / AmH) protein is Glutamate-1-semialdehyde 2,1-aminomutase.